A 281-amino-acid chain; its full sequence is Bidirectional sugar transporter SWEET14 (281 aa).

Residues 1-6 are Extracellular-facing; sequence MVLTHN. The chain crosses the membrane as a helical span at residues 7–27; sequence VLAVTFGVLGNIISFIVFLAP. In terms of domain architecture, MtN3/slv 1 spans 11–97; it reads TFGVLGNIIS…ILFITYANKK (87 aa). Residues 28–42 lie on the Cytoplasmic side of the membrane; sequence VPTFVRICKKKSIEG. The chain crosses the membrane as a helical span at residues 43 to 63; the sequence is FESLPYVSALFSAMLWIYYAL. The Extracellular segment spans residues 64–70; sequence QKDGAGF. A helical membrane pass occupies residues 71–91; that stretch reads LLITINAVGCFIETIYIILFI. Over 92–104 the chain is Cytoplasmic; it reads TYANKKARISTLK. The chain crosses the membrane as a helical span at residues 105–125; that stretch reads VLGLLNFLGFAAIILVCELLT. Over 126-132 the chain is Extracellular; that stretch reads KGSNREK. A helical transmembrane segment spans residues 133–153; that stretch reads VLGGICVGFSVCVFAAPLSIM. The MtN3/slv 2 domain occupies 133–216; that stretch reads VLGGICVGFS…MILYVIFKYY (84 aa). Residues 154–166 are Cytoplasmic-facing; that stretch reads RVVIRTKSVEFMP. Residues 167-187 form a helical membrane-spanning segment; that stretch reads FSLSLFLTISAITWLFYGLAI. At 188 to 192 the chain is on the extracellular side; the sequence is KDFYV. A helical transmembrane segment spans residues 193–213; it reads ALPNILGAFLGAVQMILYVIF. The Cytoplasmic segment spans residues 214-281; the sequence is KYYKTPLVVD…EDQMDKKMPN (68 aa). Over residues 244–259 the composition is skewed to polar residues; sequence TPASGDLTVQPQTNPD. A disordered region spans residues 244 to 281; sequence TPASGDLTVQPQTNPDVSHPIKTHGGDLEDQMDKKMPN. The segment covering 267-281 has biased composition (basic and acidic residues); that stretch reads HGGDLEDQMDKKMPN.

It belongs to the SWEET sugar transporter family. In terms of assembly, forms homooligomers and/or heterooligomers.

The protein resides in the cell membrane. Its function is as follows. Mediates both low-affinity uptake and efflux of sugar across the plasma membrane. This chain is Bidirectional sugar transporter SWEET14, found in Arabidopsis thaliana (Mouse-ear cress).